A 1469-amino-acid chain; its full sequence is MYSSSNSFLGGANSARPGQQPPFMQQQQQPSYSQFPPGQQQQPQPTGFAPQPTGYAQPQLSSFGSQLQPQPTGFPSGQLQPQFTGFPGAAPQQSQQPQPTGFQPQQPQFTGYPPQSQPPQLQVPAATGLPLRPAQTSSEIANSFRDASGAAPPPPPKSSGSKIPNIRLSFITAQDQAKFEQLFKSAVGDSQTMSGDKARELLLRSRLSGSDLSKIWVLSDSTKSGQLFFPEFALAMYLCNLRLTGRDLPDALPETIKNEVSSMVDIISFQVPDTQPEPVVRTNVPNFDAPLMENKLAPPAPQQPQPQQPTNSQLLNQLTAQPTGFLSQPTGLSPNQAPFGQQSNLAPQPTGLPGQPQQQSLQPQPTGFMSNPQPTGYSGPRPPVPPIPTGYASNLSPSQTGGMSGLVAQPTGIPGQWGFVNAPSSGLPNIEALKQQLMPQPGREGGFSTAGLAGNASIPWAITKEEKKIYDDLFRAWDGFRKGFIGGDTAIEIMGQSGLNRQDLERIWTLADPNNRGRLNMDEFAVAMHLIYRKLNGYPVPNRLPPELIPPSTRNLNDSIGTIKSLLSQDAESRKATGAFLQPQKTGVSYLKEHSFRGGAVSPGVGRKDATLFKNDDQAAAGYRSSARRRVGNNGRTPSPAASSQASEDELSVEQLKKKIRETQIMLDAVDFQDETRAEEDDALDRRDRREAESLMDRIRRVQDEIDTHPNAAFRNLDNGAERRSLRRQLQAYEDQVPQVASEVRRVEREIAEARLELFRLKDAKAHPNSALNIVGTGPGGTVTEADRIKARARARMQARAAELAGRPAPATQDDEGAAARRLESESANVKADREKNDAMTRDVEDSVKDFARSLEDSLKDVSENSTREHEKRRWEDALGVEDVIRDFIYDLKRNSRTAHIRKEEASRASPSQSQQSRYDEPPAVRPSPPPSTGSTGSLPGTTHEDRVAAAKERAQKRIAERLAAAGLKPHSEASETLVQRQEREKREREERLKRAEEEDALREQERQRRLAEERGTPAQPSTKPIGKKPPPAPPSRRARTDSADQSEAKKAADEAAKVEQTAREQAIREEQQVQEEETKRLEDEARQREEEFMKEKEAQEARLRALQEQVQQGKIKKQEEKRRKEEAERRAKEQEAKLAAQRAELEAAKERERQLQRELEAMEEESSSDDEGPEFATPRNGSPAQTEAPTAEAPPPPPPAPATAPPVPAIAEPEAPTSPATSPASSRANLSPEAESKNPWFKKIGQPADSQPAPVPQAATTPSDTHSTNPFHRLAQQQESTAPAFTGSAPLERKTRARPEDDDDWSAAGSEFDSSDDEDDRAGGGSAKQLASILFGTMAPPRPLSAMDDKSPSKTPTPVQETPAPAPEADAAPSAPVAAPPPPPPPPVPAAAPNGSAGAPPPPPPPPAPPMAPPPPPAGVPPPPAPPAAPAGAADRGALLASIQAGKGLRKVQTNDRSTSSTAGRVLD.

The segment at 1–163 is disordered; sequence MYSSSNSFLG…PPPKSSGSKI (163 aa). The segment covering 17–52 has biased composition (low complexity); that stretch reads PGQQPPFMQQQQQPSYSQFPPGQQQQPQPTGFAPQP. A compositionally biased stretch (polar residues) spans 54–83; sequence GYAQPQLSSFGSQLQPQPTGFPSGQLQPQF. Residues 85–124 are compositionally biased toward low complexity; the sequence is GFPGAAPQQSQQPQPTGFQPQQPQFTGYPPQSQPPQLQVP. An EH 1 domain is found at 175 to 263; that stretch reads DQAKFEQLFK…ETIKNEVSSM (89 aa). An EF-hand 1 domain is found at 207-242; it reads LSGSDLSKIWVLSDSTKSGQLFFPEFALAMYLCNLR. Disordered stretches follow at residues 276–311 and 323–409; these read PEPV…QPTN and TGFL…LVAQ. The segment covering 298–307 has biased composition (pro residues); sequence PPAPQQPQPQ. Over residues 323–346 the composition is skewed to polar residues; the sequence is TGFLSQPTGLSPNQAPFGQQSNLA. Positions 347 to 366 are enriched in low complexity; sequence PQPTGLPGQPQQQSLQPQPT. Over residues 391-401 the composition is skewed to polar residues; it reads YASNLSPSQTG. An EH 2 domain is found at 466 to 555; the sequence is EKKIYDDLFR…PELIPPSTRN (90 aa). Positions 499–534 constitute an EF-hand 2 domain; it reads LNRQDLERIWTLADPNNRGRLNMDEFAVAMHLIYRK. Disordered regions lie at residues 619 to 650, 801 to 845, and 898 to 1469; these read AAAG…SEDE, AAEL…RDVE, and TAHI…RVLD. A compositionally biased stretch (polar residues) spans 634–646; the sequence is NGRTPSPAASSQA. A coiled-coil region spans residues 641 to 767; it reads AASSQASEDE…LFRLKDAKAH (127 aa). Residues 818–845 are compositionally biased toward basic and acidic residues; the sequence is AAARRLESESANVKADREKNDAMTRDVE. Composition is skewed to low complexity over residues 908–917 and 933–942; these read RASPSQSQQS and TGSTGSLPGT. Composition is skewed to basic and acidic residues over residues 943-961, 981-1016, 1039-1106, 1117-1137, and 1144-1161; these read THED…RIAE, RQER…EERG, ARTD…RLRA, KKQE…EQEA, and AELE…RELE. Positions 973–1172 form a coiled coil; the sequence is EASETLVQRQ…MEEESSSDDE (200 aa). Residues 1162–1174 show a composition bias toward acidic residues; sequence AMEEESSSDDEGP. The segment covering 1193–1209 has biased composition (pro residues); the sequence is EAPPPPPPAPATAPPVP. The span at 1210–1227 shows a compositional bias: low complexity; it reads AIAEPEAPTSPATSPASS. Over residues 1264–1284 the composition is skewed to polar residues; the sequence is SDTHSTNPFHRLAQQQESTAP. Positions 1368 to 1378 are enriched in low complexity; sequence PEADAAPSAPV. Composition is skewed to pro residues over residues 1379 to 1391 and 1400 to 1430; these read AAPP…PVPA and APPP…PPAA. The 18-residue stretch at 1436-1453 folds into the WH2 domain; that stretch reads DRGALLASIQAGKGLRKV. The segment covering 1456 to 1469 has biased composition (polar residues); sequence NDRSTSSTAGRVLD.

It belongs to the PAN1 family. In terms of assembly, component of the PAN1 actin cytoskeleton-regulatory complex.

It is found in the cell membrane. It localises to the endosome membrane. The protein resides in the cytoplasm. Its subcellular location is the cytoskeleton. The protein localises to the actin patch. Its function is as follows. Component of the PAN1 actin cytoskeleton-regulatory complex required for the internalization of endosomes during actin-coupled endocytosis. The complex links the site of endocytosis to the cell membrane-associated actin cytoskeleton. Mediates uptake of external molecules and vacuolar degradation of plasma membrane proteins. Plays a role in the proper organization of the cell membrane-associated actin cytoskeleton and promotes its destabilization. The chain is Actin cytoskeleton-regulatory complex protein pan1 (pan1) from Aspergillus terreus (strain NIH 2624 / FGSC A1156).